Consider the following 494-residue polypeptide: Cysteine--tRNA ligase (494 aa).

Residue cysteine 29 participates in Zn(2+) binding. The short motif at 31–41 is the 'HIGH' region element; that stretch reads LTVSDDAHLGH. Positions 187-220 are disordered; that stretch reads KAGGVSPDDANTHRDDELPPLDGERGQTWASPWG. Over residues 196-211 the composition is skewed to basic and acidic residues; the sequence is ANTHRDDELPPLDGER. Residues cysteine 230, histidine 255, and glutamate 259 each contribute to the Zn(2+) site. The 'KMSKS' region motif lies at 287-291; the sequence is KMSSS.

Belongs to the class-I aminoacyl-tRNA synthetase family. It depends on Zn(2+) as a cofactor.

The protein localises to the cytoplasm. The enzyme catalyses tRNA(Cys) + L-cysteine + ATP = L-cysteinyl-tRNA(Cys) + AMP + diphosphate. The protein is Cysteine--tRNA ligase of Halobacterium salinarum (strain ATCC 700922 / JCM 11081 / NRC-1) (Halobacterium halobium).